The following is a 275-amino-acid chain: MHAVQRQIAEQLKVQPPFADQNALQAEVARRVGFIKDCLQNARLKTLVLGISGGVDSLTAGLLAQRAVKELRESTGDTRYRFIAVRLPYVVQADEHEAQASVDFIEPDERHTINIGSSVKALAAEVKAFDGLPASSVDFVLGNTKARMRMVAQYTVAGAYQGLVIGTDHAAEAVMGFFTKFGDGACDLAPLSGLVKNQVRAIARHFGAPESLVEKVPTADLEDLSPGKPDEASHGVTYAEIDAFLHGEPVREEAFRIICETYAKTQHKRELPYAP.

Residue 50 to 57 coordinates ATP; sequence GISGGVDS. Asp-56 contributes to the Mg(2+) binding site. Arg-147 contributes to the deamido-NAD(+) binding site. Thr-167 is an ATP binding site. Position 172 (Glu-172) interacts with Mg(2+). 2 residues coordinate deamido-NAD(+): Lys-180 and Asp-187. Positions 196 and 218 each coordinate ATP. 267-268 provides a ligand contact to deamido-NAD(+); sequence HK.

The protein belongs to the NAD synthetase family. As to quaternary structure, homodimer.

The catalysed reaction is deamido-NAD(+) + NH4(+) + ATP = AMP + diphosphate + NAD(+) + H(+). The protein operates within cofactor biosynthesis; NAD(+) biosynthesis; NAD(+) from deamido-NAD(+) (ammonia route): step 1/1. In terms of biological role, catalyzes the ATP-dependent amidation of deamido-NAD to form NAD. Uses ammonia as a nitrogen source. The chain is NH(3)-dependent NAD(+) synthetase from Pseudomonas syringae pv. tomato (strain ATCC BAA-871 / DC3000).